A 202-amino-acid chain; its full sequence is Oxopyrrolidines biosynthesis cluster protein O (202 aa).

Its function is as follows. Part of the gene cluster that mediates the biosynthesis of oxopyrrolidines, polyketide-amino acid hybrid compounds with feature structures of tetramic acid. Does not seem to play a role in oxopyrrolidines A and B biosynthesis. This chain is Oxopyrrolidines biosynthesis cluster protein O, found in Penicillium oxalicum (strain 114-2 / CGMCC 5302) (Penicillium decumbens).